The primary structure comprises 33 residues: U-limacoditoxin(13)-As11 (33 aa).

Positions 1–19 (MFKLLLVLALTMLAQSALA) are cleaved as a signal peptide. Phenylalanine amide is present on Phe-32.

Belongs to the FARP (FMRFamide related peptide) family. In terms of tissue distribution, expressed by the venom secretory cell of the spine. The spine is a cuticular structure containing a single large nucleated venom-secreting cell at its base. It is an independent unit capable of producing, storing and injecting venom. On the back of A.stimulea caterpillars, spines are grouped together by 50 to 100 to form scoli, of which there are eight.

It localises to the secreted. Is toxic when injected into Drosophila melanogaster. Also shows a low anthelmintic activity against the parasitic nematode H.contortus (drug susceptible Kirby isolate). This Acharia stimulea (Saddleback caterpillar moth) protein is U-limacoditoxin(13)-As11.